The following is a 142-amino-acid chain: Large ribosomal subunit protein uL13 (142 aa).

This sequence belongs to the universal ribosomal protein uL13 family. In terms of assembly, part of the 50S ribosomal subunit.

This protein is one of the early assembly proteins of the 50S ribosomal subunit, although it is not seen to bind rRNA by itself. It is important during the early stages of 50S assembly. In Aliivibrio salmonicida (strain LFI1238) (Vibrio salmonicida (strain LFI1238)), this protein is Large ribosomal subunit protein uL13.